Consider the following 377-residue polypeptide: Cyclin-I (377 aa).

Positions 357–377 (DLSRQEGHASPCPPLQPVSVM) are disordered. Residues 367-377 (PCPPLQPVSVM) show a composition bias toward pro residues.

This sequence belongs to the cyclin family. In terms of tissue distribution, highest levels in adult heart, brain and skeletal muscle. Lower levels in adult placenta, lung, kidney and pancreas. Also high levels in fetal brain and lower levels in fetal lung, liver and kidney. Also abundant in testis and thyroid.

Its subcellular location is the nucleus membrane. The chain is Cyclin-I from Homo sapiens (Human).